A 185-amino-acid polypeptide reads, in one-letter code: TATA-box-binding protein 3 (185 aa).

A run of 2 repeats spans residues 7–84 (IENV…ANKL) and 100–178 (VQNI…RKEF).

Belongs to the TBP family.

In terms of biological role, general factor that plays a role in the activation of archaeal genes transcribed by RNA polymerase. Binds specifically to the TATA box promoter element which lies close to the position of transcription initiation. This Methanosarcina acetivorans (strain ATCC 35395 / DSM 2834 / JCM 12185 / C2A) protein is TATA-box-binding protein 3.